Here is a 594-residue protein sequence, read N- to C-terminus: Homeobox protein prospero homolog 1 (594 aa).

Composition is skewed to polar residues over residues Met1–Gln13 and Pro36–Arg50. Disordered stretches follow at residues Met1–Ser20, Ile30–Gln180, and Asp358–Ala389. Over residues Ser73–Lys101 the composition is skewed to low complexity. A compositionally biased stretch (polar residues) spans Glu105–Ile117. Residues Glu118–Met135 are compositionally biased toward basic and acidic residues. Positions Glu136 to Glu162 are enriched in acidic residues. The span at Lys369–Met378 shows a compositional bias: basic and acidic residues. Residues Ser379–Ala389 show a composition bias toward low complexity. The Prospero-type homeo domain occupies Ser435 to Met493. The homeo-Prospero stretch occupies residues Ser435 to Glu593. The 100-residue stretch at Glu494–Glu593 folds into the Prospero domain.

It belongs to the Prospero homeodomain family.

Its subcellular location is the nucleus. Transcription factor involved in developmental processes. Controls the transcription of genes required for excretory canal formation. The protein is Homeobox protein prospero homolog 1 of Caenorhabditis elegans.